The chain runs to 158 residues: Ribosome maturation factor RimP (158 aa).

This sequence belongs to the RimP family.

The protein localises to the cytoplasm. In terms of biological role, required for maturation of 30S ribosomal subunits. This chain is Ribosome maturation factor RimP, found in Pseudomonas fluorescens (strain ATCC BAA-477 / NRRL B-23932 / Pf-5).